Reading from the N-terminus, the 121-residue chain is Large ribosomal subunit protein bL20 (121 aa).

Belongs to the bacterial ribosomal protein bL20 family.

Binds directly to 23S ribosomal RNA and is necessary for the in vitro assembly process of the 50S ribosomal subunit. It is not involved in the protein synthesizing functions of that subunit. The polypeptide is Large ribosomal subunit protein bL20 (Wolbachia sp. subsp. Drosophila simulans (strain wRi)).